The chain runs to 892 residues: Alanine--tRNA ligase (892 aa).

Zn(2+)-binding residues include histidine 565, histidine 569, cysteine 675, and histidine 679. The disordered stretch occupies residues 852–871 (MGGKGGGGRPDMAQAGGPEA).

Belongs to the class-II aminoacyl-tRNA synthetase family. It depends on Zn(2+) as a cofactor.

It is found in the cytoplasm. The catalysed reaction is tRNA(Ala) + L-alanine + ATP = L-alanyl-tRNA(Ala) + AMP + diphosphate. Catalyzes the attachment of alanine to tRNA(Ala) in a two-step reaction: alanine is first activated by ATP to form Ala-AMP and then transferred to the acceptor end of tRNA(Ala). Also edits incorrectly charged Ser-tRNA(Ala) and Gly-tRNA(Ala) via its editing domain. This chain is Alanine--tRNA ligase, found in Parvibaculum lavamentivorans (strain DS-1 / DSM 13023 / NCIMB 13966).